Consider the following 550-residue polypeptide: 2-succinyl-5-enolpyruvyl-6-hydroxy-3-cyclohexene-1-carboxylate synthase (550 aa).

The protein belongs to the TPP enzyme family. MenD subfamily. In terms of assembly, homodimer. The cofactor is Mg(2+). It depends on Mn(2+) as a cofactor. Thiamine diphosphate serves as cofactor.

It carries out the reaction isochorismate + 2-oxoglutarate + H(+) = 5-enolpyruvoyl-6-hydroxy-2-succinyl-cyclohex-3-ene-1-carboxylate + CO2. Its pathway is quinol/quinone metabolism; 1,4-dihydroxy-2-naphthoate biosynthesis; 1,4-dihydroxy-2-naphthoate from chorismate: step 2/7. It functions in the pathway quinol/quinone metabolism; menaquinone biosynthesis. Its function is as follows. Catalyzes the thiamine diphosphate-dependent decarboxylation of 2-oxoglutarate and the subsequent addition of the resulting succinic semialdehyde-thiamine pyrophosphate anion to isochorismate to yield 2-succinyl-5-enolpyruvyl-6-hydroxy-3-cyclohexene-1-carboxylate (SEPHCHC). The sequence is that of 2-succinyl-5-enolpyruvyl-6-hydroxy-3-cyclohexene-1-carboxylate synthase from Flavobacterium psychrophilum (strain ATCC 49511 / DSM 21280 / CIP 103535 / JIP02/86).